The primary structure comprises 437 residues: Ribosomal protein uS12 methylthiotransferase RimO (437 aa).

Residues 3–118 (KKFYITTLGC…AGKILREKFP (116 aa)) enclose the MTTase N-terminal domain. The [4Fe-4S] cluster site is built by C12, C48, C81, C157, C161, and C164. The Radical SAM core domain maps to 143 to 370 (NYSKPYAYVK…RDSHLEILEE (228 aa)). Positions 373-437 (ESRIGRTYDA…YEYDMNGTWV (65 aa)) constitute a TRAM domain.

The protein belongs to the methylthiotransferase family. RimO subfamily. [4Fe-4S] cluster serves as cofactor.

The protein resides in the cytoplasm. It carries out the reaction L-aspartate(89)-[ribosomal protein uS12]-hydrogen + (sulfur carrier)-SH + AH2 + 2 S-adenosyl-L-methionine = 3-methylsulfanyl-L-aspartate(89)-[ribosomal protein uS12]-hydrogen + (sulfur carrier)-H + 5'-deoxyadenosine + L-methionine + A + S-adenosyl-L-homocysteine + 2 H(+). In terms of biological role, catalyzes the methylthiolation of an aspartic acid residue of ribosomal protein uS12. In Leptospira interrogans serogroup Icterohaemorrhagiae serovar copenhageni (strain Fiocruz L1-130), this protein is Ribosomal protein uS12 methylthiotransferase RimO.